The primary structure comprises 99 residues: Large ribosomal subunit protein bL21 (99 aa).

Belongs to the bacterial ribosomal protein bL21 family. As to quaternary structure, part of the 50S ribosomal subunit. Contacts protein L20.

In terms of biological role, this protein binds to 23S rRNA in the presence of protein L20. The sequence is that of Large ribosomal subunit protein bL21 from Mesoplasma florum (strain ATCC 33453 / NBRC 100688 / NCTC 11704 / L1) (Acholeplasma florum).